A 49-amino-acid chain; its full sequence is EFLRPLFIMAIAFTLLFFTLHIMAMRNEIWRRRIAAQRRLAARMASREE.

The protein belongs to the CcmC/CycZ/HelC family.

The protein localises to the cell inner membrane. Its function is as follows. Required for the export of heme to the periplasm for the biogenesis of c-type cytochromes. This is Heme exporter protein C from Rhizobium leguminosarum bv. viciae.